A 402-amino-acid polypeptide reads, in one-letter code: MSLVLQARRSGKYFLLIDNLLVVLGFFVVFPLISIRFVDQLGWAALIVGIALGLRQLLQQGLGIFGGAIADRVGAKPMIISGMLLRAAGFATMAVASEPWILWASCTLSALGGTLFDPPRTALVIKLTRPHERGRFYSLLMMQDSAGAVIGALIGSWLLAYDFHYVCWAGAALFVLAAAWNAWLLPAYRISTIRAPVREGMLRVVRDRRFLTYVLTLTGYYMLAVQVMLMLPIMVNDIAGGPGAVKWMYAIEAALSLTLLYPIARWSEKRFRLEQRLMFGLLLMTLSLFPLGLSTTLQSLFALICCFYLGSIIAEPARETLSASLADARARGSYMGFSRLGLALGGALGYTGGGWMYDMGRSMNMPELPWALLGIIGMLTLALLYWQFSLQVPCATHQPRSS.

The next 10 helical transmembrane spans lie at 13–33 (YFLL…FPLI), 34–54 (SIRF…ALGL), 99–116 (PWIL…GTLF), 139–159 (LLMM…SWLL), 165–185 (YVCW…AWLL), 214–234 (VLTL…LPIM), 244–264 (AVKW…YPIA), 277–297 (LMFG…STTL), 340–360 (LGLA…YDMG), and 368–388 (LPWA…YWQF).

It belongs to the major facilitator superfamily. DHA1 family. MdtH (TC 2.A.1.2.21) subfamily.

The protein localises to the cell inner membrane. This chain is Multidrug resistance protein MdtH, found in Edwardsiella ictaluri (strain 93-146).